We begin with the raw amino-acid sequence, 108 residues long: UPF0102 protein Shewana3_3881 (108 aa).

It belongs to the UPF0102 family.

The protein is UPF0102 protein Shewana3_3881 of Shewanella sp. (strain ANA-3).